Consider the following 290-residue polypeptide: MKFLRSVYAFCSSWVGTIVIVLLVIFFIAQAFIIPSRSMVGTLYEGDMLFVKKFSYGIPIPKIPWIELPVMPDFKNNGHLIEGDRPKRGEVVVFIPPHEKKSYYVKRNFAIGGDEVLFTNEGFYLHPFESDTDKNYIAKHYPNAMTKEFMGKIFVLNPYKNEHPGIHYQKDNETFHLMEQLATQGAEANISMQLIQMEGEKVFYKKINDDEFFMIGDNRDNSSDSRFWGSVAYKNIVGSPWFVYFSLSLKNSLEMDAENNPKKRYLVRWERMFKSVGGLEKIIKKENATH.

Over 1–13 (MKFLRSVYAFCSS) the chain is Cytoplasmic. A helical membrane pass occupies residues 14–34 (WVGTIVIVLLVIFFIAQAFII). Residues 35-290 (PSRSMVGTLY…KIIKKENATH (256 aa)) are Extracellular-facing. Catalysis depends on residues Ser-38 and Lys-106.

The protein belongs to the peptidase S26 family.

It is found in the cell membrane. The enzyme catalyses Cleavage of hydrophobic, N-terminal signal or leader sequences from secreted and periplasmic proteins.. The chain is Signal peptidase I (lepB) from Helicobacter pylori (strain ATCC 700392 / 26695) (Campylobacter pylori).